Here is a 346-residue protein sequence, read N- to C-terminus: tRNA (guanine-N(7)-)-methyltransferase (346 aa).

Residues G101 and 124–125 (EI) contribute to the S-adenosyl-L-methionine site. The interval 149–191 (LKSAGGGGSDAAPESPAAPPTPSEAASPDSTTPSEQQAPTTLV) is disordered. Residues 171-182 (SEAASPDSTTPS) show a composition bias toward low complexity. S-adenosyl-L-methionine-binding positions include 204–205 (NT) and C224. D227 is an active-site residue. 318–320 (TEE) serves as a coordination point for S-adenosyl-L-methionine.

The protein belongs to the class I-like SAM-binding methyltransferase superfamily. TrmB family. As to quaternary structure, forms a complex with trm82.

It is found in the nucleus. It catalyses the reaction guanosine(46) in tRNA + S-adenosyl-L-methionine = N(7)-methylguanosine(46) in tRNA + S-adenosyl-L-homocysteine. Its pathway is tRNA modification; N(7)-methylguanine-tRNA biosynthesis. Catalyzes the formation of N(7)-methylguanine at position 46 (m7G46) in tRNA. The protein is tRNA (guanine-N(7)-)-methyltransferase (trm8) of Aspergillus terreus (strain NIH 2624 / FGSC A1156).